A 567-amino-acid chain; its full sequence is Geranylgeranyl transferase type-2 subunit alpha (567 aa).

PFTA repeat units follow at residues L44–V78, L88–E122, N124–V158, P159–P193, V207–P241, and V363–P397. Position 98 is a phosphoserine (S98). LRR repeat units follow at residues D442 to L463, L464 to R486, C487 to P508, R509 to A530, and R534 to L555.

Belongs to the protein prenyltransferase subunit alpha family. Heterotrimer composed of RABGGTA, RABGGTB and CHM; within this trimer, RABGGTA and RABGGTB form the catalytic component B, while CHM (component A) mediates peptide substrate binding. The Rab GGTase dimer (RGGT) interacts with CHM (component A) prior to Rab protein binding; the association is stabilized by geranylgeranyl pyrophosphate (GGpp). The CHM:RGGT:Rab complex is destabilized by GGpp. Interacts with non-phosphorylated form of RAB8A; phosphorylation of RAB8A disrupts this interaction.

The enzyme catalyses geranylgeranyl diphosphate + L-cysteinyl-[protein] = S-geranylgeranyl-L-cysteinyl-[protein] + diphosphate. The enzymatic reaction requires the aid of a Rab escort protein (also called component A), such as CHM. In terms of biological role, catalyzes the transfer of a geranylgeranyl moiety from geranylgeranyl diphosphate to both cysteines of Rab proteins with the C-terminal sequence -XXCC, -XCXC and -CCXX, such as RAB1A, RAB3A, RAB5A and RAB7A. This Sus scrofa (Pig) protein is Geranylgeranyl transferase type-2 subunit alpha (RABGGTA).